Here is a 459-residue protein sequence, read N- to C-terminus: Hepatocyte nuclear factor 3-beta (459 aa).

A transactivation domain 1 region spans residues 14 to 93; that stretch reads DWSSYYAEPE…AGAMAGMSGS (80 aa). The Nuclear localization signal signature appears at 106 to 113; that stretch reads LSPSLSPL. A Phosphothreonine modification is found at Thr156. Positions 159 to 252 form a DNA-binding region, fork-head; sequence KPPYSYISLI…FENGCYLRRQ (94 aa). Position 212 is a phosphoserine (Ser212). Low complexity predominate over residues 268 to 281; sequence GAASSGGKKTAPGS. The tract at residues 268–366 is disordered; that stretch reads GAASSGGKKT…PGLPPEAHLK (99 aa). A Phosphoserine modification is found at Ser284. Over residues 295–311 the composition is skewed to polar residues; sequence ASETPAGTESPHSSASP. A Phosphothreonine modification is found at Thr302. Phosphoserine occurs at positions 304, 307, 308, and 310. Over residues 340 to 353 the composition is skewed to low complexity; the sequence is PGQQQQAAAHLLGP. The tract at residues 362–459 is transactivation domain 2; the sequence is EAHLKPEHHY…VYSRPIMNSS (98 aa). Phosphoserine is present on residues Ser438 and Ser459.

Binds DNA as a monomer. Binds TLE1. Interacts with FOXA1 and FOXA3. Interacts with PRKDC. Interacts with AKT1. Interacts with TET1; this interaction may recruit TET1 to specific genomic loci to mediate their demethylation. Phosphorylation on Thr-156 abolishes binding to target promoters and subsequent transcription activation upon insulin stimulation. As to expression, restricted mainly to endoderm-derived tissues (lung, liver, stomach, and small intestine). Expressed in epididymis with region-specific expression pattern: no expression is observed in initial segment, low expression in proximal caput, gradiently higher levels of expression in middle and distal caput and highest level in corpus and cauda (at protein level).

The protein localises to the nucleus. It is found in the cytoplasm. In terms of biological role, transcription factor that is involved in embryonic development, establishment of tissue-specific gene expression and regulation of gene expression in differentiated tissues. Is thought to act as a 'pioneer' factor opening the compacted chromatin for other proteins through interactions with nucleosomal core histones and thereby replacing linker histones at target enhancer and/or promoter sites. Binds DNA with the consensus sequence 5'-[AC]A[AT]T[AG]TT[GT][AG][CT]T[CT]-3'. In embryonic development is required for notochord formation. Involved in the development of multiple endoderm-derived organ systems such as the liver, pancreas and lungs; Foxa1 and Foxa2 seem to have at least in part redundant roles. FOXA1 and FOXA2 are essential for hepatic specification. FOXA1 and FOXA2 are required for morphogenesis and cell differentiation during formation of the lung. FOXA1 and FOXA2 are involved in bile duct formation; they positively regulate the binding glucocorticoid receptor/NR3C1 to the IL6 promoter. FOXA1 and FOXA2 regulate multiple phases of midbrain dopaminergic neuron development; they regulate expression of NEUROG2 at the beginning of mDA neurogenesis and of NR4A2 and EN1 in immature mDA neurons. Modulates the transcriptional activity of nuclear hormone receptors; inhibits AR-mediated transcription from the LCN5 promoter. Binds to fibrinogen beta promoter and is involved in IL6-induced fibrinogen beta transcriptional activation. Originally described as a transcription activator for a number of liver genes such as AFP, albumin, tyrosine aminotransferase, PEPCK, etc. Interacts with the cis-acting regulatory regions of these genes. Involved in glucose homeostasis; regulates the expression of genes important for glucose sensing in pancreatic beta-cells and glucose homeostasis. In pancreatic beta cells activates transcription of potassium channel subunits KCNJ11 and ABCC8. Involved in regulation of fat metabolism; activates transcriptional programs of lipid metabolism and ketogenesis at low insulin state. Involved in transcriptional regulation of MUC2 in the intestine. This Mus musculus (Mouse) protein is Hepatocyte nuclear factor 3-beta (Foxa2).